The following is a 156-amino-acid chain: MAATLTPEQITEYKGIFEMFDEEGNGLVKTDDLESLMSLIGINPTKRDLANMAKDVDKDKKGTFNCDGFLVLMGIYHEKSKNQDEELRAAFKVFDKEHKGYIEWDTLKYVLMNAGEPLNEHEAELMMKEADKDGDGTIDYEEFVAMMTGESFKLTQ.

EF-hand domains lie at 8-43, 44-79, 82-117, and 118-153; these read EQIT…IGIN, PTKR…YHEK, NQDE…AGEP, and LNEH…ESFK. Positions 131, 133, 135, 137, and 142 each coordinate Ca(2+).

Belongs to the calmodulin family. Calglandulin subfamily. Expressed by the venom gland.

Its subcellular location is the cytoplasm. Its function is as follows. May be involved in the cellular control mechanism of the secretion of toxins from the gland into the venom. This is Calglandulin from Hoplocephalus stephensii (Stephens's banded snake).